We begin with the raw amino-acid sequence, 521 residues long: MIALLRWGIARPSAPLRWSRCFATSTEKGDEGWQTVIGLEIHAQIKTGKKLFSKASTSYGHVPNTNVDVHDAAFPGTLPVLDINAIRLSIMTALALNCQINPRSTFDRKHYFYHDIPASYQITQHYNPLAWNGHLEIREGDNGSKRTFNIGIKQLQVEQDTAKSQTVGDAVLVDLNRAGTGLMEIVTDPDMRSPEEAGAFVKKLQGLLRRVGSADGDMEKGNLRVDVNVSVHRPGMPFGTRCEIKNINSVRFLQAAIESERQRHIAHYCTSPLEPLAQETRGFNELTLQTYSLRSKEEATDYRYMPDHNLPAIIIDDGYLDSLWKNLPEMPWQSVERLVKTYGVTKRDAETLLGLDEYSAQGIAYFEEVVEQDKKIAKKATNWIAHELLGQLGKAIRPWTPTIVPAPLMHELVTAVESREITGTTGKAIVKHFVSLPESASLPPSFAELLAELGLTPSAASVEDLTETCKKAMNNQPKAVADFKKGNEKVVMRLVGEVMKLSGGKADAMKAKDILLDLLKD.

The transit peptide at 1–22 directs the protein to the mitochondrion; sequence MIALLRWGIARPSAPLRWSRCF.

This sequence belongs to the GatB/GatE family. GatB subfamily. In terms of assembly, subunit of the heterotrimeric GatCAB amidotransferase (AdT) complex, composed of A, B and C subunits.

The protein localises to the mitochondrion. The enzyme catalyses L-glutamyl-tRNA(Gln) + L-glutamine + ATP + H2O = L-glutaminyl-tRNA(Gln) + L-glutamate + ADP + phosphate + H(+). Allows the formation of correctly charged Gln-tRNA(Gln) through the transamidation of misacylated Glu-tRNA(Gln) in the mitochondria. The reaction takes place in the presence of glutamine and ATP through an activated gamma-phospho-Glu-tRNA(Gln). The polypeptide is Glutamyl-tRNA(Gln) amidotransferase subunit B, mitochondrial (Cryptococcus neoformans var. neoformans serotype D (strain JEC21 / ATCC MYA-565) (Filobasidiella neoformans)).